A 622-amino-acid chain; its full sequence is Auxin efflux carrier component 1 (622 aa).

Residues 1–6 lie on the Extracellular side of the membrane; the sequence is MITAAD. A helical membrane pass occupies residues 7-27; sequence FYHVMTAMVPLYVAMILAYGS. Topologically, residues 28 to 44 are cytoplasmic; that stretch reads VKWWKIFTPDQCSGINR. Residues 45-65 traverse the membrane as a helical segment; the sequence is FVALFAVPLLSFHFIAANNPY. A (indol-3-yl)acetate-binding site is contributed by Val-51. At 66–70 the chain is on the extracellular side; it reads AMNLR. A helical membrane pass occupies residues 71–91; the sequence is FLAADSLQKVIVLSLLFLWCK. Residues 92-100 lie on the Cytoplasmic side of the membrane; the sequence is LSRNGSLDW. Residues 101-121 traverse the membrane as a helical segment; the sequence is TITLFSLSTLPNTLVMGIPLL. (indol-3-yl)acetate is bound by residues Asn-112 and Leu-114. The Extracellular portion of the chain corresponds to 122 to 131; sequence KGMYGNFSGD. Asn-127 is a glycosylation site (N-linked (GlcNAc...) asparagine). The chain crosses the membrane as a helical span at residues 132–152; it reads LMVQIVVLQCIIWYTLMLFLF. Residue Tyr-145 participates in (indol-3-yl)acetate binding. The Cytoplasmic segment spans residues 153–482; it reads EYRGAKLLIS…LIRNPNSYSS (330 aa). Ser-209, Ser-212, Ser-221, and Ser-225 each carry phosphoserine. Residues 213–233 form a disordered region; the sequence is RSDIYSRRSQGLSATPRPSNL. Thr-227 is modified (phosphothreonine). Ser-231 carries the phosphoserine modification. Thr-248 carries the post-translational modification Phosphothreonine. 3 positions are modified to phosphoserine: Ser-252, Ser-253, and Ser-271. A disordered region spans residues 268 to 362; it reads GRNSNFGPGE…PVVGGKRQDG (95 aa). Position 286 is a phosphothreonine (Thr-286). Phosphoserine is present on Ser-290. Low complexity predominate over residues 298-311; that stretch reads PAKPTAAGTAAGAG. Thr-302 is subject to Phosphothreonine. Phosphoserine is present on residues Ser-317, Ser-320, and Ser-337. Residue Thr-340 is modified to Phosphothreonine. Residues Ser-374, Ser-377, Ser-408, Ser-414, Ser-426, Ser-434, and Ser-446 each carry the phosphoserine modification. The chain crosses the membrane as a helical span at residues 483–503; that stretch reads LFGITWSLISFKWNIEMPALI. Residues 504 to 506 are Extracellular-facing; the sequence is AKS. The helical transmembrane segment at 507–527 threads the bilayer; the sequence is ISILSDAGLGMAMFSLGLFMA. Over 528–541 the chain is Cytoplasmic; sequence LNPRIIACGNRRAA. A helical transmembrane segment spans residues 542-562; the sequence is FAAAMRFVVGPAVMLVASYAV. Residues 563–566 lie on the Extracellular side of the membrane; the sequence is GLRG. Residues 567–587 form a helical membrane-spanning segment; sequence VLLHVAIIQAALPQGIVPFVF. Positions 582 and 583 each coordinate (indol-3-yl)acetate. The Cytoplasmic portion of the chain corresponds to 588-601; it reads AKEYNVHPDILSTA. A helical transmembrane segment spans residues 602–622; that stretch reads VIFGMLIALPITLLYYILLGL.

It belongs to the auxin efflux carrier (TC 2.A.69.1) family. As to quaternary structure, homodimer. Interacts with TOPP4. Interacts with FYPP1 and FYPP3. Component of a complex made of PINs (e.g. PIN1 and PIN2), MAB4/MELs (e.g. NPY1/MAB4 and NPY5/MEL1) and AGC kinases (e.g. D6PK and PID) at the plasma membrane. Binds directly to NPY5/MEL1. As to expression, expressed at the basal side of elongated parenchymatous xylem cells.

It localises to the cell membrane. With respect to regulation, auxin efflux carrier activity is competitively inhibited by naptalamate (N-1-naphthylphthalamic acid, NPA) but activated by D6PK-mediated phosphorylation. Its function is as follows. Acts as a component of the auxin efflux carrier; this activity is enhanced when activated by D6PK-mediated phosphorylation. Binds auxins including indole-3-acetic acid (IAA), indole-3-butyric acid (IBA), indole-3-propionic acid (IPA) and 4-chloroindole-3-acetic acid (4-Cl-IAA). Seems to be involved in the basipetal auxin transport. Mediates the formation of auxin gradient which is required to ensure correct organogenesis. Coordinated polar localization of PIN1 is directly regulated by the vesicle trafficking process and apical-basal PIN1 polarity also depends on the phosphorylation of conserved serine residues by PID kinase. The ARF-GEF protein GNOM is required for the correct recycling of PIN1 between the plasma membrane and endosomal compartments. Recrutes NPY proteins (e.g. NPY1/MAB4 and NPY5/MEL1) to the plasma membrane in a polar basal localization in root epidermis; this activity is optimized by AGC kinases-mediated (e.g. D6PK and PID) phosphorylation that limits their lateral diffusion-based escape. In Arabidopsis thaliana (Mouse-ear cress), this protein is Auxin efflux carrier component 1.